Reading from the N-terminus, the 1368-residue chain is DNA-directed RNA polymerase subunit beta (1368 aa).

Belongs to the RNA polymerase beta chain family. In terms of assembly, the RNAP catalytic core consists of 2 alpha, 1 beta, 1 beta' and 1 omega subunit. When a sigma factor is associated with the core the holoenzyme is formed, which can initiate transcription.

It carries out the reaction RNA(n) + a ribonucleoside 5'-triphosphate = RNA(n+1) + diphosphate. Its function is as follows. DNA-dependent RNA polymerase catalyzes the transcription of DNA into RNA using the four ribonucleoside triphosphates as substrates. The polypeptide is DNA-directed RNA polymerase subunit beta (Herminiimonas arsenicoxydans).